Reading from the N-terminus, the 238-residue chain is Chromosome partition protein MukE (238 aa).

The segment at 206–238 (EESSQSSFDLDENEKLSDISAEEQHELELEGDA) is disordered. The span at 218–238 (NEKLSDISAEEQHELELEGDA) shows a compositional bias: basic and acidic residues.

It belongs to the MukE family. Interacts, and probably forms a ternary complex, with MukF and MukB. The complex formation is stimulated by calcium or magnesium.

It localises to the cytoplasm. The protein localises to the nucleoid. In terms of biological role, involved in chromosome condensation, segregation and cell cycle progression. May participate in facilitating chromosome segregation by condensation DNA from both sides of a centrally located replisome during cell division. Probably acts via its interaction with MukB and MukF. The chain is Chromosome partition protein MukE from Aliivibrio salmonicida (strain LFI1238) (Vibrio salmonicida (strain LFI1238)).